We begin with the raw amino-acid sequence, 761 residues long: Phosphoribosylformylglycinamidine synthase subunit PurL (761 aa).

His-48 is a catalytic residue. ATP is bound by residues Tyr-51 and Lys-90. Position 92 (Glu-92) interacts with Mg(2+). Residues 93-96 and Arg-115 each bind substrate; that span reads SHNH. His-94 (proton acceptor) is an active-site residue. Residue Asp-116 participates in Mg(2+) binding. Position 239 (Gln-239) interacts with substrate. Position 267 (Asp-267) interacts with Mg(2+). 311 to 313 is a substrate binding site; sequence ESQ. The ATP site is built by Asp-499 and Gly-536. Asn-537 is a binding site for Mg(2+). Ser-539 contacts substrate.

It belongs to the FGAMS family. As to quaternary structure, monomer. Part of the FGAM synthase complex composed of 1 PurL, 1 PurQ and 2 PurS subunits.

It localises to the cytoplasm. It catalyses the reaction N(2)-formyl-N(1)-(5-phospho-beta-D-ribosyl)glycinamide + L-glutamine + ATP + H2O = 2-formamido-N(1)-(5-O-phospho-beta-D-ribosyl)acetamidine + L-glutamate + ADP + phosphate + H(+). The protein operates within purine metabolism; IMP biosynthesis via de novo pathway; 5-amino-1-(5-phospho-D-ribosyl)imidazole from N(2)-formyl-N(1)-(5-phospho-D-ribosyl)glycinamide: step 1/2. In terms of biological role, part of the phosphoribosylformylglycinamidine synthase complex involved in the purines biosynthetic pathway. Catalyzes the ATP-dependent conversion of formylglycinamide ribonucleotide (FGAR) and glutamine to yield formylglycinamidine ribonucleotide (FGAM) and glutamate. The FGAM synthase complex is composed of three subunits. PurQ produces an ammonia molecule by converting glutamine to glutamate. PurL transfers the ammonia molecule to FGAR to form FGAM in an ATP-dependent manner. PurS interacts with PurQ and PurL and is thought to assist in the transfer of the ammonia molecule from PurQ to PurL. This chain is Phosphoribosylformylglycinamidine synthase subunit PurL, found in Thermosynechococcus vestitus (strain NIES-2133 / IAM M-273 / BP-1).